Reading from the N-terminus, the 205-residue chain is Holliday junction branch migration complex subunit RuvA (205 aa).

The tract at residues methionine 1–leucine 64 is domain I. A domain II region spans residues serine 65 to isoleucine 143. The tract at residues glycine 144 to valine 153 is flexible linker. The domain III stretch occupies residues valine 153 to arginine 205.

Belongs to the RuvA family. In terms of assembly, homotetramer. Forms an RuvA(8)-RuvB(12)-Holliday junction (HJ) complex. HJ DNA is sandwiched between 2 RuvA tetramers; dsDNA enters through RuvA and exits via RuvB. An RuvB hexamer assembles on each DNA strand where it exits the tetramer. Each RuvB hexamer is contacted by two RuvA subunits (via domain III) on 2 adjacent RuvB subunits; this complex drives branch migration. In the full resolvosome a probable DNA-RuvA(4)-RuvB(12)-RuvC(2) complex forms which resolves the HJ.

Its subcellular location is the cytoplasm. Functionally, the RuvA-RuvB-RuvC complex processes Holliday junction (HJ) DNA during genetic recombination and DNA repair, while the RuvA-RuvB complex plays an important role in the rescue of blocked DNA replication forks via replication fork reversal (RFR). RuvA specifically binds to HJ cruciform DNA, conferring on it an open structure. The RuvB hexamer acts as an ATP-dependent pump, pulling dsDNA into and through the RuvAB complex. HJ branch migration allows RuvC to scan DNA until it finds its consensus sequence, where it cleaves and resolves the cruciform DNA. In Rhizobium meliloti (strain 1021) (Ensifer meliloti), this protein is Holliday junction branch migration complex subunit RuvA.